A 530-amino-acid chain; its full sequence is MELNKNYKLNKQQSRALTLMCQDKNIFITAPAGAGKTLLINHYCDYVRQHEPFKKIAITSTTGVSAILIGGSTLHSYLGIGLGDGTIEDLVQRIKKASKGIKERVWKELTTLIIDEVSMLNPVLFDKLEKIARIIRGSDLPFGGIQLILSGDLLQLPVVKGGGTGNKNDHNMEFVTDANSWKKCIGNNIVLLTEIMRQKDFHFKEILLKIRVGNIDQQVRSVLSQHMKKEEKLKKEEIQPTRLFCLKKYVQDLNDSELKKLEDSGKKFINFNALIKKYSEEAVLTNKGRSRCTDLQFKFLSDRFVKDSTTPQHLRVCEGAQVMLTYNIDQLSGLVNGSRGVIIGFTEMKFPIVRFKNHKRNNLTPKLNKTNEDIKSDSTSQPQGFPEGNRRVMENPETKVSKTDDEEMNDTLELEVRPQTWEICNDFGKKIGYFKQIPLKIAYALTIHSCQGSTLDSAEVDLSDTFEHGQVYTALSRTRDLNSLVIKNLCFDSIKCHPRALQFYDDIKSMQDAISEIENSLSELDFDDDF.

The tract at residues 362–408 (NLTPKLNKTNEDIKSDSTSQPQGFPEGNRRVMENPETKVSKTDDEEM) is disordered. Over residues 388 to 403 (GNRRVMENPETKVSKT) the composition is skewed to basic and acidic residues.

Belongs to the IIV-6 030L family.

This is an uncharacterized protein from Invertebrate iridescent virus 6 (IIV-6).